A 238-amino-acid chain; its full sequence is Uridylate kinase (238 aa).

12 to 15 (KLSG) is an ATP binding site. Residues 20–25 (GDEGFG) are involved in allosteric activation by GTP. UMP is bound at residue glycine 54. The ATP site is built by glycine 55 and arginine 59. UMP contacts are provided by residues aspartate 74 and 135 to 142 (TGSPFFTT). Positions 162, 168, and 171 each coordinate ATP.

It belongs to the UMP kinase family. Homohexamer.

The protein localises to the cytoplasm. It catalyses the reaction UMP + ATP = UDP + ADP. The protein operates within pyrimidine metabolism; CTP biosynthesis via de novo pathway; UDP from UMP (UMPK route): step 1/1. Its activity is regulated as follows. Allosterically activated by GTP. Inhibited by UTP. Catalyzes the reversible phosphorylation of UMP to UDP. The protein is Uridylate kinase of Histophilus somni (strain 129Pt) (Haemophilus somnus).